The following is a 162-amino-acid chain: Small ribosomal subunit protein uS5 (162 aa).

An S5 DRBM domain is found at 7-70 (EEKMILIRRT…YARRNMVEVP (64 aa)).

It belongs to the universal ribosomal protein uS5 family. As to quaternary structure, part of the 30S ribosomal subunit. Contacts proteins S4 and S8.

Functionally, with S4 and S12 plays an important role in translational accuracy. Located at the back of the 30S subunit body where it stabilizes the conformation of the head with respect to the body. The sequence is that of Small ribosomal subunit protein uS5 (rpsE) from Thermus thermophilus (strain ATCC BAA-163 / DSM 7039 / HB27).